The following is a 406-amino-acid chain: uncharacterized protein (406 aa).

This sequence to S.pombe SpAC12C2.04.

It is found in the cytoplasm. Its subcellular location is the nucleus. This is an uncharacterized protein from Schizosaccharomyces pombe (strain 972 / ATCC 24843) (Fission yeast).